A 2228-amino-acid chain; its full sequence is Genome polyprotein (2228 aa).

A disordered region spans residues 56 to 76 (AEVGAHQSEPLKTSVDKPGSK). Short sequence motifs ((L)YPX(n)L motif) lie at residues 167–171 (YPHGL) and 200–205 (YPVWEL). The interval 766–836 (MLDRIALGDL…PRKIKGVFSQ (71 aa)) is involved in P1-2A pentamerization. Residues 1011–1031 (TVEIINTVLCFVKSGILLYVI) traverse the membrane as a helical segment. The membrane-penetrating ability stretch occupies residues 1043–1070 (IGLLRVMNYADIGCSVISCGKVFSKMLE). Residues 1127–1152 (NKKDVLNILKDNQQKIERAIEEADNF) are a coiled coil. The SF3 helicase domain maps to 1204–1366 (HQKLKNLGSI…SFFKNPHNDM (163 aa)). Residue 1230–1237 (GKRGGGKS) participates in ATP binding. A helical transmembrane segment spans residues 1462–1482 (WVAVGAAVGVLGVLVGGWYVY). Tyr1499 bears the O-(5'-phospho-RNA)-tyrosine mark. The region spanning 1514–1728 (DPVESQSTLE…VAKLVTQEMF (215 aa)) is the Peptidase C3 domain. Catalysis depends on for protease 3C activity residues His1563, Asp1603, and Cys1691. Residues 1977 to 2098 (DVGLDLDFSA…VFSRQVQFDN (122 aa)) form the RdRp catalytic domain.

Belongs to the picornaviridae polyprotein family. In terms of assembly, homodimer. Homomultimer; probably interacts with membranes in a multimeric form. Seems to assemble into amyloid-like fibers. As to quaternary structure, homodimer. Monomer. Interacts with protein 3CD. Interacts with host ACBD3. In terms of assembly, interacts with protein 3AB. As to quaternary structure, interacts with human MAVS. Homodimer; disulfide-linked. In terms of assembly, homopentamer. Homooligomer. As to quaternary structure, interacts with capsid protein VP2. Interacts with capsid protein VP3. Interacts with capsid protein VP1. Interacts with capsid protein VP3. In terms of assembly, interacts with capsid protein VP1. Interacts with capsid protein VP2. In terms of processing, specific enzymatic cleavages by viral protease in vivo yield a variety of precursors and mature proteins. Polyprotein processing intermediates are produced, such as P1-2A which is a functional precursor of the structural proteins, VP0 which is a VP4-VP2 precursor, VP1-2A precursor, 3ABC precursor which is a stable and catalytically active precursor of 3A, 3B and 3C proteins, 3AB and 3CD precursors. The assembly signal 2A is removed from VP1-2A by a host protease, possibly host Cathepsin L. This cleavage occurs over a region of 3 amino-acids probably generating VP1 proteins with heterogeneous C-termini. Post-translationally, during virion maturation, immature virions are rendered infectious following cleavage of VP0 into VP4 and VP2. This maturation seems to be an autocatalytic event triggered by the presence of RNA in the capsid and is followed by a conformational change of the particle. The assembly signal 2A is removed from VP1-2A by a host protease, possibly host Cathepsin L in naked virions. This cleavage does not occur in enveloped virions. This cleavage occurs over a region of 3 amino-acids probably generating VP1 proteins with heterogeneous C-termini. In terms of processing, VPg is uridylylated prior to priming replication into VPg-pUpU. Post-translationally, unlike other picornaviruses, does not seem to be myristoylated.

It is found in the virion. The protein resides in the host endosome. The protein localises to the host multivesicular body. Its subcellular location is the host membrane. It localises to the host mitochondrion outer membrane. It is found in the host cytoplasm. The protein resides in the host cytoplasmic vesicle membrane. The catalysed reaction is RNA(n) + a ribonucleoside 5'-triphosphate = RNA(n+1) + diphosphate. It catalyses the reaction a ribonucleoside 5'-triphosphate + H2O = a ribonucleoside 5'-diphosphate + phosphate + H(+). The enzyme catalyses Selective cleavage of Gln-|-Gly bond in the poliovirus polyprotein. In other picornavirus reactions Glu may be substituted for Gln, and Ser or Thr for Gly.. Capsid proteins VP1, VP2, and VP3 form a closed capsid enclosing the viral positive strand RNA genome. All these proteins contain a beta-sheet structure called beta-barrel jelly roll. Together they form an icosahedral capsid (T=3) composed of 60 copies of each VP1, VP2, and VP3, with a diameter of approximately 300 Angstroms. VP1 is situated at the 12 fivefold axes, whereas VP2 and VP3 are located at the quasi-sixfold axes. The naked capsid interacts with the host receptor HAVCR1 to provide virion attachment to and probably entry into the target cell. Its function is as follows. VP0 precursor is a component of the immature procapsids. In terms of biological role, plays a role in the assembly of the 12 pentamers into an icosahedral structure. Has not been detected in mature virions, supposedly owing to its small size. Functionally, precursor component of immature procapsids that corresponds to an extended form of the structural protein VP1. After maturation, possibly by the host Cathepsin L, the assembly signal 2A is cleaved to give rise to the mature VP1 protein. Functions as a viroporin. Affects membrane integrity and causes an increase in membrane permeability. Involved in host intracellular membrane rearrangements probably to give rise to the viral factories. Does not disrupt calcium homeostasis or glycoprotein trafficking. Antagonizes the innate immune response of the host by suppressing IFN-beta synthesis, which it achieves by interfering with the RIG-I/IFIH1 pathway. Its function is as follows. Affects membrane integrity and causes an increase in membrane permeability. In terms of biological role, associates with and induces structural rearrangements of intracellular membranes. Displays RNA-binding activity. Functionally, the precursor 3ABC is targeted to the mitochondrial membrane where protease 3C activity cleaves and inhibits the host antiviral protein MAVS, thereby disrupting activation of IRF3 through the IFIH1/MDA5 pathway. In vivo, the protease activity of 3ABC precursor is more efficient in cleaving the 2BC precursor than that of protein 3C. The 3ABC precursor may therefore play a role in the proteolytic processing of the polyprotein. Possible viroporin. Interacts with the 3CD precursor and with RNA structures found at both the 5'- and 3'-termini of the viral genome. Since the 3AB precursor contains the hydrophobic domain 3A, it probably anchors the whole viral replicase complex to intracellular membranes on which viral RNA synthesis occurs. Its function is as follows. May serve as membrane anchor to the 3AB and 3ABC precursors via its hydrophobic domain. May interact with RNA. In terms of biological role, acts as a primer for viral RNA replication and remains covalently bound to viral genomic RNA. VPg is uridylylated prior to priming replication into VPg-pUpU. The VPg-pUpU is then used as primer on the genomic RNA poly(A) by the RNA-dependent RNA polymerase to replicate the viral genome. Functionally, cysteine protease that generates mature viral proteins from the precursor polyprotein. In addition to its proteolytic activity, it binds to viral RNA, and thus influences viral genome replication. RNA and substrate bind cooperatively to the protease. Cleaves IKBKG/NEMO to impair innate immune signaling. Cleaves host PABPC1 which may participate in the switch of viral translation to RNA synthesis. Interacts with the 3AB precursor and with RNA structures found at both the 5'- and 3'-termini of the viral genome. Disrupts TLR3 signaling by degrading the host adapter protein TICAM1/TRIF. Its function is as follows. RNA-directed RNA polymerase 3D-POL replicates genomic and antigenomic RNA by recognizing replications specific signals. The chain is Genome polyprotein from Cercopithecus hamlyni (Owl-faced monkey).